The chain runs to 434 residues: MIDQNLLRTNLEEVAQILKLKRNFNLDVARVTSLEEQRKALQVKAENLQAERNARSKNIGAAKARGEDISALLTEVDTMGSELDAAKVELDKVQAEIRELLLNIPNLPADEVPVGKDDSENLEVSRWGTPRQFDFEIKDHVTLGEGLGGLDFPAGVKLTGSRFVVMKSGIARLHRALSQFMLDLHTEQHGYVETYVPYLVNHDTLYGTGQLPKFGEDLFHTQPLDGQDPNAVQKPYALIPTAEVPVTNLVRDEILDEESLPLKLTAHTPCFRSEAGSYGRDTRGLIRMHQFDKVEMVQIVAPEKSMEALEELTGHAEKVLQLLNLPYRKMLLCSGDMSFGSSKTYDLEVWLPAQNTYREISSCSNMWDFQARRMQARCKAKGDKKTRLVHTLNGSGLAVGRTLVAVLENYQNADGSITVPEVLKPYMGGVEVIK.

Position 241–243 (241–243 (TAE)) interacts with L-serine. 272–274 (RSE) contributes to the ATP binding site. E295 is a binding site for L-serine. 359–362 (EISS) is an ATP binding site. S395 provides a ligand contact to L-serine.

The protein belongs to the class-II aminoacyl-tRNA synthetase family. Type-1 seryl-tRNA synthetase subfamily. As to quaternary structure, homodimer. The tRNA molecule binds across the dimer.

It localises to the cytoplasm. The enzyme catalyses tRNA(Ser) + L-serine + ATP = L-seryl-tRNA(Ser) + AMP + diphosphate + H(+). The catalysed reaction is tRNA(Sec) + L-serine + ATP = L-seryl-tRNA(Sec) + AMP + diphosphate + H(+). It participates in aminoacyl-tRNA biosynthesis; selenocysteinyl-tRNA(Sec) biosynthesis; L-seryl-tRNA(Sec) from L-serine and tRNA(Sec): step 1/1. In terms of biological role, catalyzes the attachment of serine to tRNA(Ser). Is also able to aminoacylate tRNA(Sec) with serine, to form the misacylated tRNA L-seryl-tRNA(Sec), which will be further converted into selenocysteinyl-tRNA(Sec). The chain is Serine--tRNA ligase from Glaesserella parasuis serovar 5 (strain SH0165) (Haemophilus parasuis).